Here is a 521-residue protein sequence, read N- to C-terminus: Apolipoprotein N-acyltransferase (521 aa).

The next 5 membrane-spanning stretches (helical) occupy residues 24–44, 71–91, 128–148, 151–171, and 182–202; these read IKET…FIAL, WLGF…IGYI, IGFL…FNNL, IADI…NSGI, and NLLN…YGMI. Residues 218–472 enclose the CN hydrolase domain; that stretch reads LNIAAIQLNT…KGYLLSTVKL (255 aa). The Proton acceptor role is filled by Glu263. Lys331 is an active-site residue. Residue Cys383 is the Nucleophile of the active site.

It belongs to the CN hydrolase family. Apolipoprotein N-acyltransferase subfamily.

The protein resides in the cell inner membrane. The enzyme catalyses N-terminal S-1,2-diacyl-sn-glyceryl-L-cysteinyl-[lipoprotein] + a glycerophospholipid = N-acyl-S-1,2-diacyl-sn-glyceryl-L-cysteinyl-[lipoprotein] + a 2-acyl-sn-glycero-3-phospholipid + H(+). It participates in protein modification; lipoprotein biosynthesis (N-acyl transfer). In terms of biological role, catalyzes the phospholipid dependent N-acylation of the N-terminal cysteine of apolipoprotein, the last step in lipoprotein maturation. This is Apolipoprotein N-acyltransferase from Borreliella burgdorferi (strain ATCC 35210 / DSM 4680 / CIP 102532 / B31) (Borrelia burgdorferi).